We begin with the raw amino-acid sequence, 377 residues long: NADH dehydrogenase [ubiquinone] 1 alpha subcomplex subunit 9, mitochondrial (377 aa).

Residues 1–35 constitute a mitochondrion transit peptide; that stretch reads MAAAAQSRVVRVLSMSRSAITAIATSVCHGPPCRQ. K175 carries the N6-succinyllysine modification. Residues K189 and K370 each carry the N6-acetyllysine modification.

Belongs to the complex I NDUFA9 subunit family. In terms of assembly, complex I is composed of 45 different subunits. This a component of the hydrophobic protein fraction. Interacts with BLOC1S1. Interacts with SLC2A4. Interacts with CLOCK. Interacts with RAB5IF. FAD serves as cofactor. Acetylated on lysine residues. BLOC1S1 is required for acetylation.

It is found in the mitochondrion matrix. Its function is as follows. Accessory subunit of the mitochondrial membrane respiratory chain NADH dehydrogenase (Complex I), that is believed not to be involved in catalysis. Complex I functions in the transfer of electrons from NADH to the respiratory chain. The immediate electron acceptor for the enzyme is believed to be ubiquinone. The protein is NADH dehydrogenase [ubiquinone] 1 alpha subcomplex subunit 9, mitochondrial (NDUFA9) of Gorilla gorilla gorilla (Western lowland gorilla).